A 179-amino-acid polypeptide reads, in one-letter code: Exosome complex component Csl4 (179 aa).

Positions 58–137 constitute an S1 motif domain; the sequence is GDVVLGRVVD…RLSTKEEEMG (80 aa). Zn(2+)-binding residues include Cys143, Cys146, Cys159, and Cys162.

Belongs to the CSL4 family. In terms of assembly, component of the archaeal exosome complex. Forms a trimer of Rrp4 and/or Csl4 subunits. The trimer associates with a hexameric ring-like arrangement composed of 3 Rrp41-Rrp42 heterodimers. Interacts with DnaG.

It localises to the cytoplasm. Its function is as follows. Non-catalytic component of the exosome, which is a complex involved in RNA degradation. Increases the RNA binding and the efficiency of RNA degradation. Helpful for the interaction of the exosome with A-poor RNAs. The polypeptide is Exosome complex component Csl4 (Archaeoglobus fulgidus (strain ATCC 49558 / DSM 4304 / JCM 9628 / NBRC 100126 / VC-16)).